Consider the following 453-residue polypeptide: MGVILLNSNNNNHEQQRSLDEINNTINFNHNDSASQKFLAFLGPGLLVAVGYMDPGNWITSMQGGAQYGYTLLFIILISSLSAMLLQSMTVRLGIATGMDLAQMTRHFLNKPVAIMFWIIAELAIIATDIAEVIGSAIALDLIFGIPLIVGALITVFDVFLLLFIMKFGFRKIEAIVGTLIFTVLAIFVFEVYISSPHIIDMLNGFVPHKEIITNQGILYIALGIIGATIMPHNLYLHSSIVQSRKYDRHSIHEKAQAIKYATIDSNIQLSIAFVVNCLLLTLGAALFFGTKTEDLGGFYDLYLALKTEPALGATLGGIMSTLFAVALLASGQNSTITGTLAGQIVMEGFLKLSIPNWLRRLITRSLAVIPVIICLIVFKGNTEKIEQLLVFSQVFLSIALPFSLIPLQLATSNQNLMGPFKNKTWINIISWLLIIVLSGLNVYLIIQTFQEL.

11 helical membrane-spanning segments follow: residues 39–59 (LAFL…GNWI), 66–86 (AQYG…AMLL), 114–134 (AIMF…AEVI), 146–166 (IPLI…LFIM), 175–195 (AIVG…VYIS), 217–237 (GILY…NLYL), 270–290 (LSIA…LFFG), 310–330 (PALG…ALLA), 362–382 (LITR…FKGN), 388–408 (QLLV…LIPL), and 427–447 (INII…YLII).

Belongs to the NRAMP family.

The protein resides in the cell membrane. In terms of biological role, h(+)-stimulated, divalent metal cation uptake system. The chain is Divalent metal cation transporter MntH from Staphylococcus epidermidis (strain ATCC 12228 / FDA PCI 1200).